The following is a 726-amino-acid chain: Long-chain-fatty-acid--CoA ligase ACSBG1 (726 aa).

The disordered stretch occupies residues 1–39 (MPDSRAAPQESLLDASLGTTQENVGTSSLTDGQTLSKEP). Over residues 17–36 (LGTTQENVGTSSLTDGQTLS) the composition is skewed to polar residues. Residue serine 36 is modified to Phosphoserine. Tyrosine 641 is modified (phosphotyrosine). The segment at 707 to 726 (SKQGSSLPGFSLRWQTGASS) is disordered.

This sequence belongs to the ATP-dependent AMP-binding enzyme family. Bubblegum subfamily.

The protein localises to the cytoplasm. It localises to the cytoplasmic vesicle. Its subcellular location is the microsome. It is found in the endoplasmic reticulum. The protein resides in the cell membrane. The enzyme catalyses a long-chain fatty acid + ATP + CoA = a long-chain fatty acyl-CoA + AMP + diphosphate. It carries out the reaction (E)-hexadec-2-enoate + ATP + CoA = (2E)-hexadecenoyl-CoA + AMP + diphosphate. It catalyses the reaction hexadecanoate + ATP + CoA = hexadecanoyl-CoA + AMP + diphosphate. Catalyzes the conversion of fatty acids such as long-chain and very long-chain fatty acids to their active form acyl-CoAs for both synthesis of cellular lipids, and degradation via beta-oxidation. Can activate diverse saturated, monosaturated and polyunsaturated fatty acids. This chain is Long-chain-fatty-acid--CoA ligase ACSBG1, found in Bos taurus (Bovine).